Here is a 105-residue protein sequence, read N- to C-terminus: MATLQQQKIRIRLKAFDRRLLDTSCEKIVDTANRTNATAIGPIPLPTKRRVYCVLRSPHVDKDSREHFETRTHRRIIDIYQPSSKTIDALMKLDLPAGVDIEVKL.

Belongs to the universal ribosomal protein uS10 family. Part of the 30S ribosomal subunit.

Involved in the binding of tRNA to the ribosomes. The polypeptide is Small ribosomal subunit protein uS10 (Gloeothece citriformis (strain PCC 7424) (Cyanothece sp. (strain PCC 7424))).